Reading from the N-terminus, the 76-residue chain is Acyl carrier protein (76 aa).

The Carrier domain occupies 1–75 (MIFEKIKDLI…DIVFYITKNT (75 aa)). Residue Ser35 is modified to O-(pantetheine 4'-phosphoryl)serine.

Belongs to the acyl carrier protein (ACP) family. 4'-phosphopantetheine is transferred from CoA to a specific serine of apo-ACP by AcpS. This modification is essential for activity because fatty acids are bound in thioester linkage to the sulfhydryl of the prosthetic group.

The protein localises to the cytoplasm. Its pathway is lipid metabolism; fatty acid biosynthesis. In terms of biological role, carrier of the growing fatty acid chain in fatty acid biosynthesis. The polypeptide is Acyl carrier protein (Aster yellows witches'-broom phytoplasma (strain AYWB)).